Here is a 787-residue protein sequence, read N- to C-terminus: ISWI one complex protein 3 (787 aa).

A compositionally biased stretch (polar residues) spans 1-22 (MDSPSNSIQNLQQEAQGSSSAQ). 3 disordered regions span residues 1–137 (MDSP…AHEQ), 672–693 (ILEQ…LPKD), and 749–787 (TEYD…RQRT). Residues 40–50 (DQSVSVSQSSD) show a composition bias toward low complexity. Basic residues predominate over residues 79 to 92 (KPKRKRPAPPKKKA). The span at 100–137 (SNDKVEKKKTTSIAKDGKPTLKTNDKKVAPKPKPAHEQ) shows a compositional bias: basic and acidic residues. Polar residues predominate over residues 675–689 (QKSTTDNNPSINTNP). The span at 751-777 (YDSEEYVDDEEDDEADIYDDNDNDSSF) shows a compositional bias: acidic residues. Basic and acidic residues predominate over residues 778 to 787 (DDGRVKRQRT).

Component of the ISW1A complex, which at least consists of ISW1 and IOC3.

It is found in the nucleus. Its function is as follows. Functions as a component of the ISW1A complex, which acts in remodeling the chromatin by catalyzing an ATP-dependent alteration in the structure of nucleosomal DNA. The ISW1A complex represses gene expression at initiation through specific positioning of a promoter proximal dinucleosome. This is ISWI one complex protein 3 (IOC3) from Saccharomyces cerevisiae (strain ATCC 204508 / S288c) (Baker's yeast).